Consider the following 500-residue polypeptide: Aspartyl/glutamyl-tRNA(Asn/Gln) amidotransferase subunit B (500 aa).

The protein belongs to the GatB/GatE family. GatB subfamily. As to quaternary structure, heterotrimer of A, B and C subunits.

It catalyses the reaction L-glutamyl-tRNA(Gln) + L-glutamine + ATP + H2O = L-glutaminyl-tRNA(Gln) + L-glutamate + ADP + phosphate + H(+). The enzyme catalyses L-aspartyl-tRNA(Asn) + L-glutamine + ATP + H2O = L-asparaginyl-tRNA(Asn) + L-glutamate + ADP + phosphate + 2 H(+). In terms of biological role, allows the formation of correctly charged Asn-tRNA(Asn) or Gln-tRNA(Gln) through the transamidation of misacylated Asp-tRNA(Asn) or Glu-tRNA(Gln) in organisms which lack either or both of asparaginyl-tRNA or glutaminyl-tRNA synthetases. The reaction takes place in the presence of glutamine and ATP through an activated phospho-Asp-tRNA(Asn) or phospho-Glu-tRNA(Gln). In Allorhizobium ampelinum (strain ATCC BAA-846 / DSM 112012 / S4) (Agrobacterium vitis (strain S4)), this protein is Aspartyl/glutamyl-tRNA(Asn/Gln) amidotransferase subunit B.